The sequence spans 843 residues: Protein P (843 aa).

A terminal protein domain (TP) region spans residues Met-1–Gln-177. Residues Glu-178–Leu-346 are spacer. Positions Glu-347–Gln-690 are polymerase/reverse transcriptase domain (RT). The region spanning Glu-357–Ile-600 is the Reverse transcriptase domain. The Mg(2+) site is built by Asp-429, Asp-551, and Asp-552.

Belongs to the hepadnaviridae P protein family.

The catalysed reaction is DNA(n) + a 2'-deoxyribonucleoside 5'-triphosphate = DNA(n+1) + diphosphate. It carries out the reaction Endonucleolytic cleavage to 5'-phosphomonoester.. With respect to regulation, activated by host HSP70 and HSP40 in vitro to be able to bind the epsilon loop of the pgRNA. Because deletion of the RNase H region renders the protein partly chaperone-independent, the chaperones may be needed indirectly to relieve occlusion of the RNA-binding site by this domain. Inhibited by several reverse-transcriptase inhibitors: Lamivudine, Adefovir and Entecavir. Functionally, multifunctional enzyme that converts the viral RNA genome into dsDNA in viral cytoplasmic capsids. This enzyme displays a DNA polymerase activity that can copy either DNA or RNA templates, and a ribonuclease H (RNase H) activity that cleaves the RNA strand of RNA-DNA heteroduplexes in a partially processive 3'- to 5'-endonucleasic mode. Neo-synthesized pregenomic RNA (pgRNA) are encapsidated together with the P protein, and reverse-transcribed inside the nucleocapsid. Initiation of reverse-transcription occurs first by binding the epsilon loop on the pgRNA genome, and is initiated by protein priming, thereby the 5'-end of (-)DNA is covalently linked to P protein. Partial (+)DNA is synthesized from the (-)DNA template and generates the relaxed circular DNA (RC-DNA) genome. After budding and infection, the RC-DNA migrates in the nucleus, and is converted into a plasmid-like covalently closed circular DNA (cccDNA). The activity of P protein does not seem to be necessary for cccDNA generation, and is presumably released from (+)DNA by host nuclear DNA repair machinery. This Homo sapiens (Human) protein is Protein P.